The primary structure comprises 106 residues: Heat shock protein HspQ (106 aa).

The tract at residues 80-106 (DEHLDNDSMDELSQSIRNQLQAPRLRN) is disordered. The segment covering 90-100 (ELSQSIRNQLQ) has biased composition (polar residues).

This sequence belongs to the HspQ family.

It localises to the cytoplasm. Its function is as follows. Involved in the degradation of certain denaturated proteins, including DnaA, during heat shock stress. This Proteus mirabilis (strain HI4320) protein is Heat shock protein HspQ.